Consider the following 2294-residue polypeptide: Protein Ycf2 (2294 aa).

1635-1642 (GSIGTGRS) serves as a coordination point for ATP.

Belongs to the Ycf2 family.

Its subcellular location is the plastid. It localises to the chloroplast stroma. Its function is as follows. Probable ATPase of unknown function. Its presence in a non-photosynthetic plant (Epifagus virginiana) and experiments in tobacco indicate that it has an essential function which is probably not related to photosynthesis. The polypeptide is Protein Ycf2 (Ranunculus macranthus (Large buttercup)).